Consider the following 399-residue polypeptide: uncharacterized protein (399 aa).

The tract at residues 375-399 is disordered; sequence AAGGHRGSHGKSEQAATVRVVDDRR.

This sequence belongs to the mycobacterial PPE family.

This is an uncharacterized protein from Mycobacterium tuberculosis (strain ATCC 25618 / H37Rv).